Here is a 168-residue protein sequence, read N- to C-terminus: Peptidoglycan-associated lipoprotein (168 aa).

An N-terminal signal peptide occupies residues 1–24; that stretch reads MRRIQSIARSPIAIALFMSLAVAG. The N-palmitoyl cysteine moiety is linked to residue cysteine 25. Cysteine 25 carries S-diacylglycerol cysteine lipidation. Residues 51-167 form the OmpA-like domain; it reads QDFTVNVGDR…RAVTVLNGAG (117 aa).

Belongs to the Pal lipoprotein family. The Tol-Pal system is composed of five core proteins: the inner membrane proteins TolA, TolQ and TolR, the periplasmic protein TolB and the outer membrane protein Pal. They form a network linking the inner and outer membranes and the peptidoglycan layer. Post-translationally, the N-terminus is blocked.

The protein localises to the cell outer membrane. Functionally, part of the Tol-Pal system, which plays a role in outer membrane invagination during cell division and is important for maintaining outer membrane integrity. The protein is Peptidoglycan-associated lipoprotein of Brucella abortus biovar 1 (strain 9-941).